The following is a 169-amino-acid chain: Peptide deformylase (169 aa).

The Fe cation site is built by Cys91 and His133. Glu134 is an active-site residue. His137 provides a ligand contact to Fe cation.

This sequence belongs to the polypeptide deformylase family. The cofactor is Fe(2+).

The catalysed reaction is N-terminal N-formyl-L-methionyl-[peptide] + H2O = N-terminal L-methionyl-[peptide] + formate. Its function is as follows. Removes the formyl group from the N-terminal Met of newly synthesized proteins. Requires at least a dipeptide for an efficient rate of reaction. N-terminal L-methionine is a prerequisite for activity but the enzyme has broad specificity at other positions. This Erwinia tasmaniensis (strain DSM 17950 / CFBP 7177 / CIP 109463 / NCPPB 4357 / Et1/99) protein is Peptide deformylase.